Reading from the N-terminus, the 203-residue chain is Outer-membrane lipoprotein carrier protein (203 aa).

An N-terminal signal peptide occupies residues 1–21 (MKKMAIACALLSSVVASSVWA). The interval 178 to 203 (QQNGAVDPSKFTFTPPQGVTIDDQRK) is disordered.

This sequence belongs to the LolA family. As to quaternary structure, monomer.

It is found in the periplasm. Participates in the translocation of lipoproteins from the inner membrane to the outer membrane. Only forms a complex with a lipoprotein if the residue after the N-terminal Cys is not an aspartate (The Asp acts as a targeting signal to indicate that the lipoprotein should stay in the inner membrane). The sequence is that of Outer-membrane lipoprotein carrier protein from Salmonella paratyphi A (strain ATCC 9150 / SARB42).